Here is a 369-residue protein sequence, read N- to C-terminus: MAVSLPLVFTAPRRGMPPKHLADLDSAERREAVKELGLPGFRADQLARQYYARLEADPEKMTDLPAAVREQVGAALFPTLLTPVKHLACDGGDTRKTLWKANDGTLLESVLMRYPDRATLCISSQAGCGMACPFCATGQGGLQRNLSTAEIVDQVRAAAAALRDGDVHGGPGRLSNVVFMGMGEPLANYKRVVAAVRRITSPAPDGLGLSQRSVTVSTVGLAPAIRKLADEDLSVTLAVSLHTPDDELRDTLVPVNNRWSVAEVLDAARYYADKSGRRVSIEYALIRDVNDQPWRADLLGKKLRKALGPLVHVNLIPLNPTPGSEWDASPKPVEKEFVRRVLAQGVSCTVRDTRGQEIAAACGQLAAEN.

The active-site Proton acceptor is glutamate 108. One can recognise a Radical SAM core domain in the interval 114–351 (YPDRATLCIS…LAQGVSCTVR (238 aa)). Cysteine 121 and cysteine 362 are disulfide-bonded. Residues cysteine 128, cysteine 132, and cysteine 135 each contribute to the [4Fe-4S] cluster site. Residues 183–184 (GE), serine 217, 240–242 (SLH), and asparagine 319 each bind S-adenosyl-L-methionine. The active-site S-methylcysteine intermediate is cysteine 362.

Belongs to the radical SAM superfamily. RlmN family. [4Fe-4S] cluster is required as a cofactor.

It is found in the cytoplasm. It carries out the reaction adenosine(2503) in 23S rRNA + 2 reduced [2Fe-2S]-[ferredoxin] + 2 S-adenosyl-L-methionine = 2-methyladenosine(2503) in 23S rRNA + 5'-deoxyadenosine + L-methionine + 2 oxidized [2Fe-2S]-[ferredoxin] + S-adenosyl-L-homocysteine. The catalysed reaction is adenosine(37) in tRNA + 2 reduced [2Fe-2S]-[ferredoxin] + 2 S-adenosyl-L-methionine = 2-methyladenosine(37) in tRNA + 5'-deoxyadenosine + L-methionine + 2 oxidized [2Fe-2S]-[ferredoxin] + S-adenosyl-L-homocysteine. Specifically methylates position 2 of adenine 2503 in 23S rRNA and position 2 of adenine 37 in tRNAs. The sequence is that of Probable dual-specificity RNA methyltransferase RlmN from Rhodococcus jostii (strain RHA1).